Reading from the N-terminus, the 230-residue chain is Triosephosphate isomerase (230 aa).

9–11 (NYK) is a binding site for substrate. Residue histidine 93 is the Electrophile of the active site. Glutamate 141 serves as the catalytic Proton acceptor. Substrate contacts are provided by residues isoleucine 146, glycine 180, and 201–202 (AS).

Belongs to the triosephosphate isomerase family. As to quaternary structure, homotetramer; dimer of dimers.

The protein localises to the cytoplasm. The enzyme catalyses D-glyceraldehyde 3-phosphate = dihydroxyacetone phosphate. It participates in carbohydrate biosynthesis; gluconeogenesis. The protein operates within carbohydrate degradation; glycolysis; D-glyceraldehyde 3-phosphate from glycerone phosphate: step 1/1. Functionally, involved in the gluconeogenesis. Catalyzes stereospecifically the conversion of dihydroxyacetone phosphate (DHAP) to D-glyceraldehyde-3-phosphate (G3P). This Sulfolobus acidocaldarius (strain ATCC 33909 / DSM 639 / JCM 8929 / NBRC 15157 / NCIMB 11770) protein is Triosephosphate isomerase.